A 218-amino-acid chain; its full sequence is Cytochrome b6 (218 aa).

A helical membrane pass occupies residues 35–55 (IFYCLGGITLVCFLIQFATGF). Cysteine 38 contacts heme c. Positions 89 and 103 each coordinate heme b. Helical transmembrane passes span 93 to 113 (ASMM…TGGF), 119 to 139 (LTWV…VTGY), and 189 to 209 (LHTF…FLMI). Histidine 190 and histidine 205 together coordinate heme b.

The protein belongs to the cytochrome b family. PetB subfamily. In terms of assembly, the 4 large subunits of the cytochrome b6-f complex are cytochrome b6, subunit IV (17 kDa polypeptide, PetD), cytochrome f and the Rieske protein, while the 4 small subunits are PetG, PetL, PetM and PetN. The complex functions as a dimer. It depends on heme b as a cofactor. The cofactor is heme c.

The protein resides in the cellular thylakoid membrane. Component of the cytochrome b6-f complex, which mediates electron transfer between photosystem II (PSII) and photosystem I (PSI), cyclic electron flow around PSI, and state transitions. This is Cytochrome b6 from Parasynechococcus marenigrum (strain WH8102).